The primary structure comprises 260 residues: MFDIGVNLTSSQFAKDRDDVVACAFDAGVNGLLITGTNLRESQQAQKLARQYSSCWSTAGVHPHDSSQWQAATEEAIIELAAQPEVVAIGECGLDFNRNFSTPEEQERAFVAQLRIAADLNMPVFMHCRDAHERFMTLLEPWLDKLPGAVLHCFTGTREEMQACVAHGIYIGITGWVCDERRGLELRELLPLIPAEKLLIETDAPYLLPRDLTPKPSSRRNEPAHLPHILQRIAHWRGEDAAWLAATTDANVKTLFGIAF.

A divalent metal cation contacts are provided by E91, H127, and H152.

Belongs to the metallo-dependent hydrolases superfamily. TatD-type hydrolase family. TatD subfamily. Monomer. It depends on Mg(2+) as a cofactor. Requires Mn(2+) as cofactor.

Its subcellular location is the cytoplasm. In terms of biological role, 3'-5' exonuclease that prefers single-stranded DNA and RNA. May play a role in the H(2)O(2)-induced DNA damage repair. This is 3'-5' ssDNA/RNA exonuclease TatD from Escherichia coli (strain K12).